The sequence spans 66 residues: Large ribosomal subunit protein uL29 (66 aa).

The protein belongs to the universal ribosomal protein uL29 family.

This is Large ribosomal subunit protein uL29 from Borreliella burgdorferi (strain ZS7) (Borrelia burgdorferi).